We begin with the raw amino-acid sequence, 413 residues long: Transcription factor E2F4 (413 aa).

Positions methionine 1–lysine 20 are disordered. An N-acetylalanine modification is found at alanine 2. The DNA-binding element occupies serine 16–glycine 85. A leucine-zipper region spans residues leucine 43–leucine 65. A DEF box motif is present at residues aspartate 48–glycine 85. The dimerization stretch occupies residues proline 86 to isoleucine 181. The segment at proline 211–alanine 340 is disordered. 2 stretches are compositionally biased toward polar residues: residues alanine 234–proline 249 and threonine 293–aspartate 306. Low complexity predominate over residues serine 307 to serine 327. The segment at proline 337–leucine 413 is transactivation. Serine 384 is subject to Phosphoserine. Positions aspartate 389–tyrosine 392 match the HCFC1-binding-motif (HBM) motif. Positions histidine 390–aspartate 407 are interaction with RBL1 and RBL2.

This sequence belongs to the E2F/DP family. Component of the DRTF1/E2F transcription factor complex. Binds cooperatively with TFDP1/Dp-1 to E2F sites. The E2F4/TFDP1 dimer interacts preferentially with pocket protein RBL1, which inhibits the E2F transactivation domain. Lower affinity interaction has been found with retinoblastoma protein RB1. Interacts with TRRAP, which probably mediates its interaction with histone acetyltransferase complexes, leading to transcription activation. Interacts with HCFC1. Component of the DREAM complex (also named LINC complex) at least composed of E2F4, E2F5, LIN9, LIN37, LIN52, LIN54, MYBL1, MYBL2, RBL1, RBL2, RBBP4, TFDP1 and TFDP2. The complex exists in quiescent cells where it represses cell cycle-dependent genes. It dissociates in S phase when LIN9, LIN37, LIN52 and LIN54 form a subcomplex that binds to MYBL2. Interacts with PML (isoform PML-1, isoform PML-2, isoform PML-3, isoform PML-4 and isoform PML-5). Interacts with CEBPA (when phosphorylated). Differentially phosphorylated in vivo. Found in all tissue examined including heart, brain, placenta, lung, liver, skeletal muscle, kidney and pancreas.

The protein localises to the nucleus. Transcription activator that binds DNA cooperatively with DP proteins through the E2 recognition site, 5'-TTTC[CG]CGC-3' found in the promoter region of a number of genes whose products are involved in cell cycle regulation or in DNA replication. The DRTF1/E2F complex functions in the control of cell-cycle progression from G1 to S phase. E2F4 binds with high affinity to RBL1 and RBL2. In some instances can also bind RB1. Specifically required for multiciliate cell differentiation: together with MCIDAS and E2F5, binds and activate genes required for centriole biogenesis. The chain is Transcription factor E2F4 (E2F4) from Homo sapiens (Human).